The primary structure comprises 196 residues: ATP-dependent Clp protease proteolytic subunit (196 aa).

Serine 99 (nucleophile) is an active-site residue. Histidine 124 is a catalytic residue.

Belongs to the peptidase S14 family. As to quaternary structure, fourteen ClpP subunits assemble into 2 heptameric rings which stack back to back to give a disk-like structure with a central cavity, resembling the structure of eukaryotic proteasomes.

It localises to the cytoplasm. The catalysed reaction is Hydrolysis of proteins to small peptides in the presence of ATP and magnesium. alpha-casein is the usual test substrate. In the absence of ATP, only oligopeptides shorter than five residues are hydrolyzed (such as succinyl-Leu-Tyr-|-NHMec, and Leu-Tyr-Leu-|-Tyr-Trp, in which cleavage of the -Tyr-|-Leu- and -Tyr-|-Trp bonds also occurs).. In terms of biological role, cleaves peptides in various proteins in a process that requires ATP hydrolysis. Has a chymotrypsin-like activity. Plays a major role in the degradation of misfolded proteins. This chain is ATP-dependent Clp protease proteolytic subunit, found in Nitratiruptor sp. (strain SB155-2).